Reading from the N-terminus, the 367-residue chain is Glutamate 5-kinase (367 aa).

Residue Lys10 coordinates ATP. Ser50, Asp137, and Asn149 together coordinate substrate. ATP is bound by residues 169 to 170 and 211 to 217; these read TD and TGGMGTK. One can recognise a PUA domain in the interval 275–353; that stretch reads AGEITVDEGA…QQIDAILGYE (79 aa).

Belongs to the glutamate 5-kinase family.

Its subcellular location is the cytoplasm. It catalyses the reaction L-glutamate + ATP = L-glutamyl 5-phosphate + ADP. It functions in the pathway amino-acid biosynthesis; L-proline biosynthesis; L-glutamate 5-semialdehyde from L-glutamate: step 1/2. In terms of biological role, catalyzes the transfer of a phosphate group to glutamate to form L-glutamate 5-phosphate. The polypeptide is Glutamate 5-kinase (Enterobacter sp. (strain 638)).